The following is a 95-amino-acid chain: Co-chaperonin GroES (95 aa).

The protein belongs to the GroES chaperonin family. In terms of assembly, heptamer of 7 subunits arranged in a ring. Interacts with the chaperonin GroEL.

It localises to the cytoplasm. Its function is as follows. Together with the chaperonin GroEL, plays an essential role in assisting protein folding. The GroEL-GroES system forms a nano-cage that allows encapsulation of the non-native substrate proteins and provides a physical environment optimized to promote and accelerate protein folding. GroES binds to the apical surface of the GroEL ring, thereby capping the opening of the GroEL channel. The protein is Co-chaperonin GroES of Vesicomyosocius okutanii subsp. Calyptogena okutanii (strain HA).